We begin with the raw amino-acid sequence, 307 residues long: Putative flagellar export/assembly protein LafU (307 aa).

A helical transmembrane segment spans residues 32–54; it reads AWKVAFADFTLAMMALFMTLWIV. Residues 87-108 are disordered; the sequence is SPSHPPKPATVAAPEETEKKAR. One can recognise an OmpA-like domain in the interval 154 to 272; it reads LRVLIKDDQN…RIEIMVLTKS (119 aa).

It belongs to the MotB family.

The protein localises to the cell inner membrane. In terms of biological role, part of the flagellar gene cluster Flag-2. However, the Flag-2 flagellar system could be inactive in strain 042 due to a frameshift in lfgC. In Escherichia coli O44:H18 (strain 042 / EAEC), this protein is Putative flagellar export/assembly protein LafU.